The chain runs to 70 residues: DNA-directed RNA polymerase subunit epsilon (70 aa).

Belongs to the RNA polymerase subunit epsilon family. As to quaternary structure, RNAP is composed of a core of 2 alpha, a beta and a beta' subunit. The core is associated with a delta subunit, and at least one of epsilon or omega. When a sigma factor is associated with the core the holoenzyme is formed, which can initiate transcription.

It catalyses the reaction RNA(n) + a ribonucleoside 5'-triphosphate = RNA(n+1) + diphosphate. Its function is as follows. A non-essential component of RNA polymerase (RNAP). The sequence is that of DNA-directed RNA polymerase subunit epsilon from Bacillus cereus (strain ATCC 14579 / DSM 31 / CCUG 7414 / JCM 2152 / NBRC 15305 / NCIMB 9373 / NCTC 2599 / NRRL B-3711).